Reading from the N-terminus, the 414-residue chain is Serine/threonine transporter SstT (414 aa).

Transmembrane regions (helical) follow at residues 22-42, 54-74, 89-109, 148-168, 189-209, 223-243, 305-325, and 337-357; these read GLVL…TIGF, IFVK…VMAA, IIVL…IAGF, AIFK…GLAL, IVHV…AETL, LLAV…PILV, MAGA…TLGL, and IVAA…LLLI.

Belongs to the dicarboxylate/amino acid:cation symporter (DAACS) (TC 2.A.23) family.

Its subcellular location is the cell inner membrane. The catalysed reaction is L-serine(in) + Na(+)(in) = L-serine(out) + Na(+)(out). It catalyses the reaction L-threonine(in) + Na(+)(in) = L-threonine(out) + Na(+)(out). Functionally, involved in the import of serine and threonine into the cell, with the concomitant import of sodium (symport system). The sequence is that of Serine/threonine transporter SstT from Haemophilus influenzae (strain 86-028NP).